The following is a 101-amino-acid chain: Protein snet-1 (101 aa).

A signal peptide spans 1–20; the sequence is MARFTPLLMILLALVPLYYS.

In terms of processing, may be degraded by the nep-2 peptidase. Expressed in coelomocytes, the ASK sensory neurons and interneurons AIB, AIM and PVQ.

It is found in the secreted. The protein localises to the perikaryon. In terms of biological role, negatively regulates chemotaxis and olfactory plasticity which is the change from positive chemotaxis to dispersal after prolonged exposure to an odorant. May be down-regulated in response to pheromone exposure, resulting in promotion of olfactory plasticity. This Caenorhabditis elegans protein is Protein snet-1.